The primary structure comprises 387 residues: MGSNGADNAHNNAFGGGKNPGIGNTSGAGSNGSASSNRGNSNGWSWSNKPHKNDGFHSDGSYHITFHGDNNSKPKPGGNSGNRGNNGDGASAKVGEITITPDNSKPGRYISSNPEYSLLAKLIDAESIKGTEVYTFHTRKGQYVKVTVPDSNIDKMRVDYVNWKGPKYNNKLVKRFVSQFLLFRKEEKEKNEKEALLKASELVSGMGDKLGEYLGVKYKNVAKEVANDIKNFHGRNIRSYNEAMASLNKVLANPKMKVNKSDKDAIVNAWKQVNAKDMANKIGNLGKAFKVADLAIKVEKIREKSIEGYNTGNWGPLLLEVESWIIGGVVAGVAISLFGAVLSFLPISGLAVTALGVIGIMTISYLSSFIDANRVSNINNIISSVIR.

Over residues 1-11 (MGSNGADNAHN) the composition is skewed to polar residues. Residues 1–106 (MGSNGADNAH…ITITPDNSKP (106 aa)) form a disordered region. A compositionally biased stretch (gly residues) spans 14–30 (FGGGKNPGIGNTSGAGS). Over residues 31–48 (NGSASSNRGNSNGWSWSN) the composition is skewed to low complexity. Over residues 78–87 (GNSGNRGNNG) the composition is skewed to gly residues. 2 helical membrane passes run 325-345 (IIGGVVAGVAISLFGAVLSFL) and 350-370 (LAVTALGVIGIMTISYLSSFI).

Belongs to the channel forming colicin family.

Its subcellular location is the cell membrane. Its function is as follows. This colicin is a channel-forming colicin. This class of transmembrane toxins depolarize the cytoplasmic membrane, leading to dissipation of cellular energy. In terms of biological role, colicins are polypeptide toxins produced by and active against E.coli and closely related bacteria. The chain is Colicin-N (cna) from Escherichia coli.